Reading from the N-terminus, the 398-residue chain is KiSS-1 receptor (398 aa).

The Extracellular portion of the chain corresponds to 1–46 (MHTVATSGPNASWGAPANASGCPGCGANASDGPVPSPRAVDAWLVP). 3 N-linked (GlcNAc...) asparagine glycosylation sites follow: Asn10, Asn18, and Asn28. A helical transmembrane segment spans residues 47-67 (LFFAALMLLGLVGNSLVIYVI). Residues 68-78 (CRHKPMRTVTN) lie on the Cytoplasmic side of the membrane. Residues 79–101 (FYIANLAATDVTFLLCCVPFTAL) form a helical membrane-spanning segment. The Extracellular segment spans residues 102-120 (LYPLPGWVLGDFMCKFVNY). Cys115 and Cys191 are oxidised to a cystine. The chain crosses the membrane as a helical span at residues 121 to 138 (IQQVSVQATCATLTAMSV). The Cytoplasmic portion of the chain corresponds to 139–157 (DRWYVTVFPLRALHRRTPR). A helical membrane pass occupies residues 158–178 (LALAVSLSIWVGSAAVSAPVL). Residues 179–202 (ALHRLSPGPRAYCSEAFPSRALER) are Extracellular-facing. A helical transmembrane segment spans residues 203 to 223 (AFALYNLLALYLLPLLATCAC). The Cytoplasmic portion of the chain corresponds to 224 to 263 (YAAMLRHLGRVAVRPAPADSALQGQVLAERAGAVRAKVSR). The helical transmembrane segment at 264-284 (LVAAVVLLFAACWGPIQLFLV) threads the bilayer. Residues 285-305 (LQALGPAGSWHPRSYAAYALK) lie on the Extracellular side of the membrane. A helical transmembrane segment spans residues 306–328 (TWAHCMSYSNSALNPLLYAFLGS). Topologically, residues 329–398 (HFRQAFRRVC…CVLGEDNAPL (70 aa)) are cytoplasmic. Residues 341-363 (APRRPRRPRRPGPSDPAAPHAEL) form a disordered region.

This sequence belongs to the G-protein coupled receptor 1 family. In terms of tissue distribution, most highly expressed in the pancreas, placenta and spinal cord, with lower-level of expression in peripheral blood leukocytes, kidney, lung, fetal liver, stomach, small intestine, testes, spleen, thymus, adrenal glands and lymph nodes. In the adult brain, expressed in the superior frontal gyrus, putamen, caudate nucleus, cingulate gyrus, nucleus accumbens, hippocampus, pons and amygdala, as well as the hypothalamus and pituitary. Expression levels are higher in early (7-9 weeks) than term placentas. Expression levels were increased in both early placentas and molar pregnancies and were reduced in choriocarcinoma cells. Expressed at higher levels in first trimester trophoblasts than at term of gestation. Also found in the extravillous trophoblast suggesting endocrine/paracrine activation mechanism.

Its subcellular location is the cell membrane. In terms of biological role, receptor for metastin (kisspeptin-54 or kp-54), a C-terminally amidated peptide of KiSS1. KiSS1 is a metastasis suppressor protein that suppresses metastases in malignant melanomas and in some breast carcinomas without affecting tumorigenicity. The metastasis suppressor properties may be mediated in part by cell cycle arrest and induction of apoptosis in malignant cells. The receptor is essential for normal gonadotropin-released hormone physiology and for puberty. The hypothalamic KiSS1/KISS1R system is a pivotal factor in central regulation of the gonadotropic axis at puberty and in adulthood. The receptor is also probably involved in the regulation and fine-tuning of trophoblast invasion generated by the trophoblast itself. Analysis of the transduction pathways activated by the receptor identifies coupling to phospholipase C and intracellular calcium release through pertussis toxin-insensitive G(q) proteins. The sequence is that of KiSS-1 receptor (KISS1R) from Homo sapiens (Human).